We begin with the raw amino-acid sequence, 445 residues long: Argininosuccinate synthase (445 aa).

ATP is bound by residues 17–25 (AFSGGLDTS) and Ala43. Tyr99 contributes to the L-citrulline binding site. ATP-binding residues include Gly129 and Thr131. L-aspartate is bound by residues Thr131, Asn135, and Asp136. L-citrulline is bound at residue Asn135. An ATP-binding site is contributed by Asp136. Residues Arg139 and Ser192 each coordinate L-citrulline. Asp194 contributes to the ATP binding site. L-citrulline-binding residues include Thr201, Glu203, and Glu280.

It belongs to the argininosuccinate synthase family. Type 2 subfamily. As to quaternary structure, homotetramer.

Its subcellular location is the cytoplasm. It catalyses the reaction L-citrulline + L-aspartate + ATP = 2-(N(omega)-L-arginino)succinate + AMP + diphosphate + H(+). It functions in the pathway amino-acid biosynthesis; L-arginine biosynthesis; L-arginine from L-ornithine and carbamoyl phosphate: step 2/3. This chain is Argininosuccinate synthase, found in Polaromonas naphthalenivorans (strain CJ2).